A 137-amino-acid chain; its full sequence is uncharacterized protein (137 aa).

5 helical membrane-spanning segments follow: residues alanine 4–cysteine 26, isoleucine 35–isoleucine 57, isoleucine 62–leucine 84, alanine 89–leucine 111, and threonine 116–isoleucine 135. The EamA domain maps to valine 13–isoleucine 135.

Its subcellular location is the cell membrane. This is an uncharacterized protein from Methanocaldococcus jannaschii (strain ATCC 43067 / DSM 2661 / JAL-1 / JCM 10045 / NBRC 100440) (Methanococcus jannaschii).